Consider the following 505-residue polypeptide: Prenylcysteine oxidase 1 (505 aa).

Positions 1-27 (MGRVVAELVSSLLGLWLLLCSCGCPEG) are cleaved as a signal peptide. 3 N-linked (GlcNAc...) asparagine glycosylation sites follow: Asn-196, Asn-323, and Asn-353.

It belongs to the prenylcysteine oxidase family. The cofactor is FAD.

It is found in the lysosome. The catalysed reaction is an S-polyprenyl-L-cysteine + O2 + H2O = a polyprenal + L-cysteine + H2O2. The enzyme catalyses S-(2E,6E)-farnesyl-L-cysteine + O2 + H2O = (2E,6E)-farnesal + L-cysteine + H2O2. It catalyses the reaction [(2E,6E,10E)-geranylgeranyl]-L-cysteine + O2 + H2O = (2E,6E,10E)-geranylgeranial + L-cysteine + H2O2. Prenylcysteine oxidase that cleaves the thioether bond of prenyl-L-cysteines, such as farnesylcysteine and geranylgeranylcysteine. Only active against free prenylcysteines and not prenylcysteine residues within prenylated proteins or peptides. Involved in the final step in the degradation of prenylated proteins, by degrading prenylcysteines after the protein has been degraded. This is Prenylcysteine oxidase 1 from Pongo abelii (Sumatran orangutan).